Reading from the N-terminus, the 678-residue chain is MSHKINSKPFILHSEFKPSGDQPQAIEILAENLNDGLAHQTLLGVTGSGKTFTIANVIAKLNRPAMLLAPNKTLAAQLYAEMKAFFPENAVEYFVSYYDYYQPEAYVPSSDTFIEKDASINDQIEQMRLSATKSFLERRDTIVVASVSAIYGLGDPDSYLKMMLHLQTGAIIDQRQILVRLAELQYTRNDQAFQRGTFRVRGEIIDIFPAESDDRAVRIELFDDEIERLSLFDPLTGTGFGAVPRFTVYPKTHYVTPREQILDAIEKIKSELADRREYFIKENKLLEEQRITQRTQFDIEMMNELGYCSGIENYSRYLSGRNEGEPPPTLFDYMPSDALLVIDESHVTVPQIGGMYRGDRSRKETLVEYGFRLPSALDNRPLRFEEFERLAPQTIYVSATPGPYELEKSGTEIIDQVVRPTGLLDPEIEIRPVSIQVDDLLSEARQRADRNERVLVTTLTKRMAEDLTDYLDEHGIRVRYLHSDIDTVERVEIIRDLRLGEFDVLVGINLLREGLDIPEVSLVAILDADKEGFLRSERSLIQTIGRAARNLKGKAILYADRITNSMEKAITETNRRREKQMKYNEEHGITPQGLNKKVGELLDIGQGGSNKSRNKPRSQKAAEPATTYAIPMTAKEYQQQIKKLEQQMYKFAQDLEFEKAAAIRDQLHKLREQFVENG.

The Helicase ATP-binding domain maps to glutamate 31–valine 417. Glycine 44–threonine 51 provides a ligand contact to ATP. The short motif at tyrosine 97–isoleucine 120 is the Beta-hairpin element. In terms of domain architecture, Helicase C-terminal spans glutamine 436–leucine 602. The interval aspartate 603–alanine 625 is disordered. The UVR domain maps to glutamine 638–glutamine 673.

This sequence belongs to the UvrB family. As to quaternary structure, forms a heterotetramer with UvrA during the search for lesions. Interacts with UvrC in an incision complex.

It is found in the cytoplasm. Functionally, the UvrABC repair system catalyzes the recognition and processing of DNA lesions. A damage recognition complex composed of 2 UvrA and 2 UvrB subunits scans DNA for abnormalities. Upon binding of the UvrA(2)B(2) complex to a putative damaged site, the DNA wraps around one UvrB monomer. DNA wrap is dependent on ATP binding by UvrB and probably causes local melting of the DNA helix, facilitating insertion of UvrB beta-hairpin between the DNA strands. Then UvrB probes one DNA strand for the presence of a lesion. If a lesion is found the UvrA subunits dissociate and the UvrB-DNA preincision complex is formed. This complex is subsequently bound by UvrC and the second UvrB is released. If no lesion is found, the DNA wraps around the other UvrB subunit that will check the other stand for damage. This chain is UvrABC system protein B, found in Mannheimia succiniciproducens (strain KCTC 0769BP / MBEL55E).